A 606-amino-acid polypeptide reads, in one-letter code: ATP-dependent rRNA helicase SPB4 (606 aa).

Positions 7 to 35 (WDNLGFSLLPWIRTGLDVMGFETMTPVQA) match the Q motif motif. A Helicase ATP-binding domain is found at 38–224 (IPMLAGNKDV…KTGLRNPVRI (187 aa)). Position 51–58 (51–58 (SVTGSGKT)) interacts with ATP. Residues 172–175 (DEAD) carry the DEAD box motif. One can recognise a Helicase C-terminal domain in the interval 248 to 404 (KLQLLVSILN…ELDLEVKGIT (157 aa)). The residue at position 254 (Ser254) is a Phosphoserine. The stretch at 539-582 (KTLTKERKLERKEKMSLKRKAIEEELKAEELDENAEEERIKEDW) forms a coiled coil.

It belongs to the DEAD box helicase family. DDX55/SPB4 subfamily. Component of pre-60S ribosomal complexes.

It localises to the nucleus. The protein localises to the nucleolus. It carries out the reaction ATP + H2O = ADP + phosphate + H(+). Functionally, ATP-binding RNA helicase involved in the biogenesis of 60S ribosomal subunits. Binds 90S pre-ribosomal particles and dissociates from pre-60S ribosomal particles after processing of 27SB pre-rRNA. Required for the normal formation of 18S rRNA through the processing of pre-rRNAs at sites A0, A1 and A2, and the normal formation of 25S and 5.8S rRNAs through the processing of pre-rRNAs at sites C1 and C2. Also required for recruitment of NOG2 to pre-ribosomes. This Saccharomyces cerevisiae (strain ATCC 204508 / S288c) (Baker's yeast) protein is ATP-dependent rRNA helicase SPB4.